Here is a 142-residue protein sequence, read N- to C-terminus: Large ribosomal subunit protein uL13 (142 aa).

This sequence belongs to the universal ribosomal protein uL13 family. As to quaternary structure, part of the 50S ribosomal subunit.

Functionally, this protein is one of the early assembly proteins of the 50S ribosomal subunit, although it is not seen to bind rRNA by itself. It is important during the early stages of 50S assembly. This Sodalis glossinidius (strain morsitans) protein is Large ribosomal subunit protein uL13.